Consider the following 473-residue polypeptide: Photosystem II CP43 reaction center protein (473 aa).

Positions 1–14 (MKTLYSLRRFYPVE) are excised as a propeptide. Thr15 carries the post-translational modification N-acetylthreonine. Thr15 is subject to Phosphothreonine. 5 helical membrane passes run 69-93 (LFEV…PHLA), 134-155 (LIGP…KDKN), 178-200 (KALY…RKIT), 255-275 (KPFA…LSYS), and 291-312 (WFNN…ASQA). Residue Glu367 coordinates [CaMn4O5] cluster. The helical transmembrane segment at 447–471 (RARAAAAGFEKGIDRDTEPVLSMTP) threads the bilayer.

The protein belongs to the PsbB/PsbC family. PsbC subfamily. In terms of assembly, PSII is composed of 1 copy each of membrane proteins PsbA, PsbB, PsbC, PsbD, PsbE, PsbF, PsbH, PsbI, PsbJ, PsbK, PsbL, PsbM, PsbT, PsbX, PsbY, PsbZ, Psb30/Ycf12, at least 3 peripheral proteins of the oxygen-evolving complex and a large number of cofactors. It forms dimeric complexes. Binds multiple chlorophylls and provides some of the ligands for the Ca-4Mn-5O cluster of the oxygen-evolving complex. It may also provide a ligand for a Cl- that is required for oxygen evolution. PSII binds additional chlorophylls, carotenoids and specific lipids. is required as a cofactor.

The protein localises to the plastid. It localises to the chloroplast thylakoid membrane. One of the components of the core complex of photosystem II (PSII). It binds chlorophyll and helps catalyze the primary light-induced photochemical processes of PSII. PSII is a light-driven water:plastoquinone oxidoreductase, using light energy to abstract electrons from H(2)O, generating O(2) and a proton gradient subsequently used for ATP formation. This chain is Photosystem II CP43 reaction center protein, found in Angiopteris evecta (Mule's foot fern).